The sequence spans 1196 residues: DNA-directed RNA polymerase subunit 2 (1196 aa).

The interval 1074–1095 (SRARGPTQLLTRQAPEGRSRDG) is disordered. A C4-type zinc finger spans residues 1133-1154 (CDSCGQFAHKVPEKKYYTCTGC).

Belongs to the RNA polymerase beta chain family.

It is found in the virion. The enzyme catalyses RNA(n) + a ribonucleoside 5'-triphosphate = RNA(n+1) + diphosphate. Functionally, DNA-dependent RNA polymerase catalyzes the transcription of DNA into RNA using the four ribonucleoside triphosphates as substrates. This Acanthamoeba polyphaga mimivirus (APMV) protein is DNA-directed RNA polymerase subunit 2 (RPO2).